Here is a 700-residue protein sequence, read N- to C-terminus: Tectonic-2 (700 aa).

The N-terminal stretch at 1–25 (MGSLSPLSLLWGLLLLQGVLRPLRG) is a signal peptide. At 26–665 (DPVFIPPFIR…YYQGEPQSQC (640 aa)) the chain is on the extracellular side. Residues Asn76, Asn82, Asn146, Asn156, and Asn389 are each glycosylated (N-linked (GlcNAc...) asparagine). The helical transmembrane segment at 666–682 (VAKGLMLLSLLMLAILL) threads the bilayer. The Cytoplasmic segment spans residues 683 to 700 (RHPWVRMCKARDSAAIYH).

It belongs to the tectonic family. Part of the tectonic-like complex (also named B9 complex). In terms of tissue distribution, significant expression is observed in brain, kidney and eye.

It is found in the membrane. The protein resides in the cytoplasm. Its subcellular location is the cytoskeleton. The protein localises to the cilium basal body. Component of the tectonic-like complex, a complex localized at the transition zone of primary cilia and acting as a barrier that prevents diffusion of transmembrane proteins between the cilia and plasma membranes. Required for hedgehog signaling transduction. In Mus musculus (Mouse), this protein is Tectonic-2 (Tctn2).